An 851-amino-acid chain; its full sequence is Nucleolar RNA helicase 2 (851 aa).

Residues 1–260 (MPGKLRSGAK…IPVEQKEGAF (260 aa)) form a disordered region. Phosphoserine is present on residues serine 7 and serine 13. Basic and acidic residues-rich tracts occupy residues 26–42 (PSEK…KTEE) and 99–113 (EPLE…KEII). Lysine 39 carries the N6-acetyllysine modification. 3 tandem repeats follow at residues 117–153 (PSEE…GLSQ), 154–190 (PSEE…GLSQ), and 191–227 (PSEE…GLSQ). Residues 117-227 (PSEEEADMPK…SPRLKDGLSQ (111 aa)) are 3 X 37 AA tandem repeats. Serine 118 bears the Phosphoserine mark. Residues 133-145 (GKEANGDAGEKSP) are compositionally biased toward basic and acidic residues. The residue at position 134 (lysine 134) is an N6-acetyllysine. A phosphoserine mark is found at serine 144, serine 155, serine 181, serine 192, serine 218, serine 236, serine 243, serine 244, and serine 245. The segment covering 170–182 (GKEANGDAGEKSP) has biased composition (basic and acidic residues). Residues 207 to 223 (GKEASGDAGEKSPRLKD) are compositionally biased toward basic and acidic residues. A compositionally biased stretch (polar residues) spans 226–237 (SQPSEPKSNSSD). Residues 246–257 (ETEKEIPVEQKE) are compositionally biased toward basic and acidic residues. A Q motif motif is present at residues 258–286 (GAFSNFPISEETVKLLKARGVNFLFPIQA). The Helicase ATP-binding domain occupies 289–468 (FHHVYSGKDL…KKYMKSTYEQ (180 aa)). An ATP-binding site is contributed by 302 to 309 (ARTGTGKT). Threonine 368 bears the Phosphothreonine mark. The short motif at 411–414 (DEVD) is the DEAD box element. The Helicase C-terminal domain maps to 501-645 (DVIRVYSGHQ…GVPSATEIIK (145 aa)). Serine 639 bears the Phosphoserine mark. Lysine 672 carries the N6-acetyllysine modification. Residues 783–851 (QPELEGPPDG…KRSFSKAFGQ (69 aa)) form a disordered region. Repeat copies occupy residues 807–811 (FRGQR), 817–823 (FRGQGQR), and 829–833 (FRGQR). The 3 X 5 AA repeats stretch occupies residues 807 to 833 (FRGQRGGSRNFRGQGQRGGSRNFRGQR). Lysine 847 carries the N6-acetyllysine modification.

This sequence belongs to the DEAD box helicase family. DDX21/DDX50 subfamily. In terms of assembly, homodimer; homodimerizes via its N-terminus. Found in a multi-helicase-TICAM1 complex at least composed of DHX36, DDX1, DDX21 and TICAM1; this complex exists in resting cells with or without poly(I:C) RNA ligand stimulation. Interacts (via C-terminus) with TICAM1 (via TIR domain). Interacts with DHX36 (via C-terminus); this interaction serves as bridges to TICAM1. Interacts (via C-terminus) with DDX1 (via B30.2/SPRY domain); this interaction serves as bridges to TICAM1. Component of the B-WICH complex, at least composed of SMARCA5/SNF2H, BAZ1B/WSTF, SF3B1, DEK, MYO1C, ERCC6, MYBBP1A and DDX21. Interacts with C1QBP. Interacts with JUN. Interacts with WDR46. Interacts with MCM3AP. Interacts with WDR43. Interacts with KPNA3. Interacts with GID4. Post-translationally, acetylation by CREBBP/CBP inhibits the helicase activity. Deacetylation by SIRT7 promotes the helicase activity and overcomes R-loop-mediated stalling of RNA polymerases. As to expression, highly expressed in liver and testis. Expressed at lower level in brain, lungs, and skeletal muscle.

Its subcellular location is the nucleus. It is found in the nucleolus. The protein localises to the nucleoplasm. It localises to the cytoplasm. The protein resides in the cytosol. Its subcellular location is the mitochondrion. The enzyme catalyses ATP + H2O = ADP + phosphate + H(+). Acetylation inhibits the helicase activity. Its function is as follows. RNA helicase that acts as a sensor of the transcriptional status of both RNA polymerase (Pol) I and II: promotes ribosomal RNA (rRNA) processing and transcription from polymerase II (Pol II). Binds various RNAs, such as rRNAs, snoRNAs, 7SK and, at lower extent, mRNAs. In the nucleolus, localizes to rDNA locus, where it directly binds rRNAs and snoRNAs, and promotes rRNA transcription, processing and modification. Required for rRNA 2'-O-methylation, possibly by promoting the recruitment of late-acting snoRNAs SNORD56 and SNORD58 with pre-ribosomal complexes. In the nucleoplasm, binds 7SK RNA and is recruited to the promoters of Pol II-transcribed genes: acts by facilitating the release of P-TEFb from inhibitory 7SK snRNP in a manner that is dependent on its helicase activity, thereby promoting transcription of its target genes. Functions as cofactor for JUN-activated transcription: required for phosphorylation of JUN at 'Ser-77'. Can unwind double-stranded RNA (helicase) and can fold or introduce a secondary structure to a single-stranded RNA (foldase). Together with SIRT7, required to prevent R-loop-associated DNA damage and transcription-associated genomic instability: deacetylation by SIRT7 activates the helicase activity, thereby overcoming R-loop-mediated stalling of RNA polymerases. Involved in rRNA processing. May bind to specific miRNA hairpins. Component of a multi-helicase-TICAM1 complex that acts as a cytoplasmic sensor of viral double-stranded RNA (dsRNA) and plays a role in the activation of a cascade of antiviral responses including the induction of pro-inflammatory cytokines via the adapter molecule TICAM1. This Mus musculus (Mouse) protein is Nucleolar RNA helicase 2 (Ddx21).